The chain runs to 73 residues: Putative membrane protein insertion efficiency factor (73 aa).

It belongs to the UPF0161 family.

It is found in the cell inner membrane. Functionally, could be involved in insertion of integral membrane proteins into the membrane. The protein is Putative membrane protein insertion efficiency factor of Treponema denticola (strain ATCC 35405 / DSM 14222 / CIP 103919 / JCM 8153 / KCTC 15104).